Reading from the N-terminus, the 195-residue chain is Imidazoleglycerol-phosphate dehydratase (195 aa).

It belongs to the imidazoleglycerol-phosphate dehydratase family.

Its subcellular location is the cytoplasm. It catalyses the reaction D-erythro-1-(imidazol-4-yl)glycerol 3-phosphate = 3-(imidazol-4-yl)-2-oxopropyl phosphate + H2O. It functions in the pathway amino-acid biosynthesis; L-histidine biosynthesis; L-histidine from 5-phospho-alpha-D-ribose 1-diphosphate: step 6/9. The sequence is that of Imidazoleglycerol-phosphate dehydratase from Clostridium botulinum (strain Alaska E43 / Type E3).